Consider the following 506-residue polypeptide: UPF0371 protein FN1121 (506 aa).

It belongs to the UPF0371 family.

The protein is UPF0371 protein FN1121 of Fusobacterium nucleatum subsp. nucleatum (strain ATCC 25586 / DSM 15643 / BCRC 10681 / CIP 101130 / JCM 8532 / KCTC 2640 / LMG 13131 / VPI 4355).